A 257-amino-acid polypeptide reads, in one-letter code: MVQVKAIKAFSDNYIWCLTTSNNTQAWVVDPGQAEPVLDYLAQHNLTLAGILITHHHYDHTDGVAKLVSENPNIAVYGPTNSPFKGITQQLTDGQSITVLNTAFNIIATPGHTLDHICYVNEQLAFTGDTLFSGGCGRLFEGSAEQMWHSFNKLRELPADCKVYCTHEYTQANLAFATAIEPRNPELLAYSKRVDELRSKNEITLPSTIGQELKINPFMRSDLPNITELLPKEFCSVTKNNEPWENFAGLRKFKDHF.

His55, His57, Asp59, His60, His112, Asp129, and His167 together coordinate Zn(2+).

The protein belongs to the metallo-beta-lactamase superfamily. Glyoxalase II family. In terms of assembly, monomer. The cofactor is Zn(2+).

It catalyses the reaction an S-(2-hydroxyacyl)glutathione + H2O = a 2-hydroxy carboxylate + glutathione + H(+). Its pathway is secondary metabolite metabolism; methylglyoxal degradation; (R)-lactate from methylglyoxal: step 2/2. Functionally, thiolesterase that catalyzes the hydrolysis of S-D-lactoyl-glutathione to form glutathione and D-lactic acid. This Pseudoalteromonas translucida (strain TAC 125) protein is Hydroxyacylglutathione hydrolase.